A 427-amino-acid polypeptide reads, in one-letter code: Isocitrate lyase (427 aa).

Residue 89 to 91 (SGW) participates in substrate binding. Asp-150 serves as a coordination point for Mg(2+). Cys-188 serves as the catalytic Proton acceptor. Residues 189 to 190 (GH), Arg-225, 310 to 314 (NCSPS), and Thr-344 contribute to the substrate site.

It belongs to the isocitrate lyase/PEP mutase superfamily. Isocitrate lyase family. Homotetramer. The cofactor is Mg(2+).

It carries out the reaction D-threo-isocitrate = glyoxylate + succinate. It participates in carbohydrate metabolism; glyoxylate cycle; (S)-malate from isocitrate: step 1/2. Involved in the metabolic adaptation in response to environmental changes. Catalyzes the reversible formation of succinate and glyoxylate from isocitrate, a key step of the glyoxylate cycle, which operates as an anaplerotic route for replenishing the tricarboxylic acid cycle during growth on fatty acid substrates. This is Isocitrate lyase (aceA) from Halalkalibacterium halodurans (strain ATCC BAA-125 / DSM 18197 / FERM 7344 / JCM 9153 / C-125) (Bacillus halodurans).